A 239-amino-acid chain; its full sequence is Sugar fermentation stimulation protein homolog (239 aa).

The protein belongs to the SfsA family.

This Desulforamulus reducens (strain ATCC BAA-1160 / DSM 100696 / MI-1) (Desulfotomaculum reducens) protein is Sugar fermentation stimulation protein homolog.